A 490-amino-acid chain; its full sequence is Cytochrome P450 2C54 (490 aa).

Ser127 carries the phosphoserine modification. An N6-acetyllysine mark is found at Lys252 and Lys375. Residue Cys435 participates in heme binding.

This sequence belongs to the cytochrome P450 family. Requires heme as cofactor. Expressed in liver.

It localises to the endoplasmic reticulum membrane. The protein resides in the microsome membrane. The catalysed reaction is an organic molecule + reduced [NADPH--hemoprotein reductase] + O2 = an alcohol + oxidized [NADPH--hemoprotein reductase] + H2O + H(+). Its function is as follows. Metabolizes arachidonic acid mainly to 12-hydroxyeicosatetraenoic acid (HETE). The protein is Cytochrome P450 2C54 of Mus musculus (Mouse).